We begin with the raw amino-acid sequence, 411 residues long: 1-deoxy-D-xylulose 5-phosphate reductoisomerase (411 aa).

Positions 23, 24, 25, 26, 49, 50, 51, and 137 each coordinate NADPH. A 1-deoxy-D-xylulose 5-phosphate-binding site is contributed by K138. E139 contacts NADPH. Residue D163 participates in Mn(2+) binding. Residues S164, E165, S199, and H222 each coordinate 1-deoxy-D-xylulose 5-phosphate. Residue E165 coordinates Mn(2+). G228 is an NADPH binding site. Positions 235, 240, 241, and 244 each coordinate 1-deoxy-D-xylulose 5-phosphate. E244 lines the Mn(2+) pocket.

Belongs to the DXR family. The cofactor is Mg(2+). Requires Mn(2+) as cofactor.

It carries out the reaction 2-C-methyl-D-erythritol 4-phosphate + NADP(+) = 1-deoxy-D-xylulose 5-phosphate + NADPH + H(+). The protein operates within isoprenoid biosynthesis; isopentenyl diphosphate biosynthesis via DXP pathway; isopentenyl diphosphate from 1-deoxy-D-xylulose 5-phosphate: step 1/6. Functionally, catalyzes the NADPH-dependent rearrangement and reduction of 1-deoxy-D-xylulose-5-phosphate (DXP) to 2-C-methyl-D-erythritol 4-phosphate (MEP). This chain is 1-deoxy-D-xylulose 5-phosphate reductoisomerase, found in Mannheimia succiniciproducens (strain KCTC 0769BP / MBEL55E).